A 231-amino-acid polypeptide reads, in one-letter code: NADH-ubiquinone oxidoreductase chain 4 (231 aa).

The next 6 helical transmembrane spans lie at 1–21, 34–54, 61–80, 84–106, 118–138, and 156–178; these read PIAG…YGII, TFLP…LTCL, SLIA…AIII, WGLS…LFCL, ILIL…WWLL, and LLIM…LSML.

This sequence belongs to the complex I subunit 4 family.

It is found in the mitochondrion membrane. It carries out the reaction a ubiquinone + NADH + 5 H(+)(in) = a ubiquinol + NAD(+) + 4 H(+)(out). In terms of biological role, core subunit of the mitochondrial membrane respiratory chain NADH dehydrogenase (Complex I) that is believed to belong to the minimal assembly required for catalysis. Complex I functions in the transfer of electrons from NADH to the respiratory chain. The immediate electron acceptor for the enzyme is believed to be ubiquinone. This is NADH-ubiquinone oxidoreductase chain 4 (MT-ND4) from Trimeresurus albolabris (White-lipped pit viper).